A 127-amino-acid polypeptide reads, in one-letter code: I-Kappa-B like protein J1 (127 aa).

ANK repeat units lie at residues 43 to 76 (HGNT…DLDE) and 81 to 111 (DGDT…RFGS).

This sequence belongs to the polydnaviridae I-Kappa-B-like protein family.

Functionally, suppresses the host immune response through NF-kappa-B inactivation. Possesses ankyrin repeat domains required for NF-kappa-B binding but lacks the regulatory regions required for dissociation from NF-kappa-B and degradation. Therefore, prevents host NF-kappa-B release and subsequent activation. This Microplitis demolitor (Parasitoid wasp) protein is I-Kappa-B like protein J1 (J2).